The sequence spans 399 residues: Aromatic-amino-acid aminotransferase (399 aa).

Substrate is bound by residues Gly36, Tyr67, Trp132, and Asn184. Lys247 carries the post-translational modification N6-(pyridoxal phosphate)lysine. Residue Arg375 coordinates substrate.

The protein belongs to the class-I pyridoxal-phosphate-dependent aminotransferase family. In terms of assembly, homodimer. It depends on pyridoxal 5'-phosphate as a cofactor.

Its subcellular location is the cytoplasm. The catalysed reaction is an aromatic L-alpha-amino acid + 2-oxoglutarate = an aromatic oxo-acid + L-glutamate. The chain is Aromatic-amino-acid aminotransferase (phhC) from Pseudomonas aeruginosa (strain ATCC 15692 / DSM 22644 / CIP 104116 / JCM 14847 / LMG 12228 / 1C / PRS 101 / PAO1).